We begin with the raw amino-acid sequence, 236 residues long: Leucyl/phenylalanyl-tRNA--protein transferase (236 aa).

The protein belongs to the L/F-transferase family.

It localises to the cytoplasm. The enzyme catalyses N-terminal L-lysyl-[protein] + L-leucyl-tRNA(Leu) = N-terminal L-leucyl-L-lysyl-[protein] + tRNA(Leu) + H(+). It catalyses the reaction N-terminal L-arginyl-[protein] + L-leucyl-tRNA(Leu) = N-terminal L-leucyl-L-arginyl-[protein] + tRNA(Leu) + H(+). It carries out the reaction L-phenylalanyl-tRNA(Phe) + an N-terminal L-alpha-aminoacyl-[protein] = an N-terminal L-phenylalanyl-L-alpha-aminoacyl-[protein] + tRNA(Phe). Functionally, functions in the N-end rule pathway of protein degradation where it conjugates Leu, Phe and, less efficiently, Met from aminoacyl-tRNAs to the N-termini of proteins containing an N-terminal arginine or lysine. The sequence is that of Leucyl/phenylalanyl-tRNA--protein transferase from Shewanella sp. (strain ANA-3).